A 578-amino-acid polypeptide reads, in one-letter code: MPDSNFAERSEEQVSGAKVIAQALKTQDVEYIFGIVGIPVTEIAIAAQQLGIKYIGMRNEQAACYAASAIGYLTSRPGVCLVVSGPGLIHALGGMANANMNCWPLLVIGGSSERNQETMGAFQEFPQVEACRLYTKFSARPSSIEAIPFVIEKAVRSSIYGRPGACYVDIPADFVNLQVNVNSIKYMERCMSPPISMAETSAVCTAASVIRNAKQPLLIIGKGAAYAHAEESIKKLVEQYKLPFLPTPMGKGVVPDNHPYCVGAARSRALQFADVIVLFGARLNWILHFGLPPRYQPDVKFIQVDICAEELGNNVKPAVTLLGNIHAVTKQLLEELDKTPWQYPPESKWWKTLREKMKSNEAASKELASKKSLPMNYYTVFYHVQEQLPRDCFVVSEGANTMDIGRTVLQNYLPRHRLDAGTFGTMGVGLGFAIAAAVVAKDRSPGQWIICVEGDSAFGFSGMEVETICRYNLPIILLVVNNNGIYQGFDTDTWKEMLKFQDATAVVPPMCLLPNSHYEQVMTAFGGKGYFVQTPEELQKSLRQSLADTTKPSLINIMIEPQATRKAQDFHWLTRSNM.

Residue Ser4 is modified to Phosphoserine. Residue Glu60 coordinates thiamine diphosphate. Lys351, Lys358, and Lys365 each carry N6-succinyllysine. Positions 401–486 (TMDIGRTVLQ…LLVVNNNGIY (86 aa)) are thiamine pyrophosphate binding. Mg(2+)-binding residues include Asp455 and Asn482. The Microbody targeting signal signature appears at 576–578 (SNM).

It belongs to the TPP enzyme family. As to quaternary structure, homotetramer. Mg(2+) is required as a cofactor. It depends on thiamine diphosphate as a cofactor. Widely expressed.

Its subcellular location is the peroxisome. It carries out the reaction a 2-hydroxy-3-methyl fatty acyl-CoA = a 2-methyl-branched fatty aldehyde + formyl-CoA. The enzyme catalyses an (R)-2-hydroxy-long-chain-fatty acyl-CoA = a long-chain fatty aldehyde + formyl-CoA. The catalysed reaction is 2-hydroxy-3-methylhexadecanoyl-CoA = 2-methylpentadecanal + formyl-CoA. It catalyses the reaction 2-hydroxyoctadecanoyl-CoA = heptadecanal + formyl-CoA. It carries out the reaction 2-hydroxyphytanoyl-CoA = 2,6,10,14-tetramethylpentadecanal + formyl-CoA. The protein operates within lipid metabolism; fatty acid metabolism. Its function is as follows. Peroxisomal 2-OH acyl-CoA lyase involved in the cleavage (C1 removal) reaction in the fatty acid alpha-oxydation in a thiamine pyrophosphate (TPP)-dependent manner. Involved in the degradation of 3-methyl-branched fatty acids like phytanic acid and the shortening of 2-hydroxy long-chain fatty acids. Plays a significant role in the biosynthesis of heptadecanal in the liver. The polypeptide is 2-hydroxyacyl-CoA lyase 1 (Homo sapiens (Human)).